The chain runs to 200 residues: Outer-membrane lipoprotein LolB (200 aa).

Positions 1–18 (MRRGRLLIAGLAALVLSA) are cleaved as a signal peptide. Residue Cys19 is the site of N-palmitoyl cysteine attachment. Residue Cys19 is the site of S-diacylglycerol cysteine attachment.

This sequence belongs to the LolB family. Monomer.

Its subcellular location is the cell outer membrane. Plays a critical role in the incorporation of lipoproteins in the outer membrane after they are released by the LolA protein. The chain is Outer-membrane lipoprotein LolB from Alkalilimnicola ehrlichii (strain ATCC BAA-1101 / DSM 17681 / MLHE-1).